The following is a 370-amino-acid chain: 3-dehydroquinate synthase (370 aa).

NAD(+)-binding positions include 108-112 (GVIGD), 132-133 (TT), Lys-145, and Lys-154. Residues Glu-187, His-249, and His-267 each contribute to the Zn(2+) site.

This sequence belongs to the sugar phosphate cyclases superfamily. Dehydroquinate synthase family. It depends on Co(2+) as a cofactor. The cofactor is Zn(2+). NAD(+) is required as a cofactor.

It localises to the cytoplasm. The enzyme catalyses 7-phospho-2-dehydro-3-deoxy-D-arabino-heptonate = 3-dehydroquinate + phosphate. Its pathway is metabolic intermediate biosynthesis; chorismate biosynthesis; chorismate from D-erythrose 4-phosphate and phosphoenolpyruvate: step 2/7. Catalyzes the conversion of 3-deoxy-D-arabino-heptulosonate 7-phosphate (DAHP) to dehydroquinate (DHQ). The protein is 3-dehydroquinate synthase of Cereibacter sphaeroides (strain ATCC 17023 / DSM 158 / JCM 6121 / CCUG 31486 / LMG 2827 / NBRC 12203 / NCIMB 8253 / ATH 2.4.1.) (Rhodobacter sphaeroides).